The primary structure comprises 64 residues: DNA-binding protein 7 (64 aa).

N6-methyllysine is present on residues K5 and K7.

It belongs to the 7 kDa DNA-binding/endoribonuclease P2 family. As to quaternary structure, monomer.

Its subcellular location is the cytoplasm. Can constrain negative DNA supercoils. May be involved in maintaining the integrity of the genome at high temperature. In Sulfurisphaera tokodaii (strain DSM 16993 / JCM 10545 / NBRC 100140 / 7) (Sulfolobus tokodaii), this protein is DNA-binding protein 7.